Reading from the N-terminus, the 902-residue chain is 26S proteasome regulatory subunit rpn-1 (902 aa).

Positions 1–41 are enriched in basic and acidic residues; sequence MAQESDLSKTADKGKGKAVDDEKKHQDVDGKTPANGKKEEE. Residues 1–54 form a disordered region; it reads MAQESDLSKTADKGKGKAVDDEKKHQDVDGKTPANGKKEEEQNASEELSEEDQQ. Residues 42–52 show a composition bias toward acidic residues; it reads QNASEELSEED. PC repeat units follow at residues 415–448, 449–487, 488–522, 525–559, 568–601, 645–680, 681–715, and 716–750; these read STVA…QIQA, GAYL…LIRV, ATIM…SMQV, MAAL…GSRL, ALGL…KPTA, AVLG…NIRR, AVPL…EVAI, and NAIF…DQES.

The protein belongs to the proteasome subunit S2 family.

Its function is as follows. Acts as a regulatory subunit of the 26 proteasome which is involved in the ATP-dependent degradation of ubiquitinated proteins. This is 26S proteasome regulatory subunit rpn-1 (rpn-1) from Neurospora crassa (strain ATCC 24698 / 74-OR23-1A / CBS 708.71 / DSM 1257 / FGSC 987).